Here is a 443-residue protein sequence, read N- to C-terminus: Signal recognition particle 54 kDa protein (443 aa).

Residues 107-114 (GVQGSGKT), 189-193 (DTAGR), and 247-250 (TKLD) each bind GTP.

Belongs to the GTP-binding SRP family. SRP54 subfamily. Part of the signal recognition particle protein translocation system, which is composed of SRP and FtsY. Archaeal SRP consists of a 7S RNA molecule of 300 nucleotides and two protein subunits: SRP54 and SRP19.

The protein localises to the cytoplasm. The enzyme catalyses GTP + H2O = GDP + phosphate + H(+). Functionally, involved in targeting and insertion of nascent membrane proteins into the cytoplasmic membrane. Binds to the hydrophobic signal sequence of the ribosome-nascent chain (RNC) as it emerges from the ribosomes. The SRP-RNC complex is then targeted to the cytoplasmic membrane where it interacts with the SRP receptor FtsY. This chain is Signal recognition particle 54 kDa protein, found in Pyrococcus horikoshii (strain ATCC 700860 / DSM 12428 / JCM 9974 / NBRC 100139 / OT-3).